Reading from the N-terminus, the 525-residue chain is GMP synthase [glutamine-hydrolyzing] (525 aa).

Residues 16 to 205 (PVLVVDFGAQ…LHDFAGLGAQ (190 aa)) enclose the Glutamine amidotransferase type-1 domain. Cys-93 functions as the Nucleophile in the catalytic mechanism. Catalysis depends on residues His-179 and Glu-181. The GMPS ATP-PPase domain occupies 206–399 (WTPANIANAL…LGLPEEIVAR (194 aa)). 233-239 (SGGVDSA) is a binding site for ATP.

Homodimer.

The catalysed reaction is XMP + L-glutamine + ATP + H2O = GMP + L-glutamate + AMP + diphosphate + 2 H(+). Its pathway is purine metabolism; GMP biosynthesis; GMP from XMP (L-Gln route): step 1/1. Functionally, catalyzes the synthesis of GMP from XMP. This is GMP synthase [glutamine-hydrolyzing] (guaA) from Mycobacterium tuberculosis (strain CDC 1551 / Oshkosh).